Consider the following 1703-residue polypeptide: Gingipain R1 (1703 aa).

An N-terminal signal peptide occupies residues 1 to 20; sequence MNKFVSIALCSSLLGGMAFA. The propeptide occupies 21–224; it reads QQTELGRNPN…RMFMNYEPGR (204 aa). Ca(2+)-binding residues include aspartate 302, valine 324, aspartate 327, tyrosine 329, glutamate 331, glutamate 385, and histidine 390. Residue histidine 435 is the Proton donor of the active site. The Nucleophile role is filled by cysteine 468. Ca(2+) contacts are provided by phenylalanine 473, glutamate 482, aspartate 516, glutamate 517, glutamate 520, and histidine 526. The segment at 940–968 is disordered; that stretch reads WDAPNGTPNPNPNPNPNPNPGTTTLSESF. A compositionally biased stretch (pro residues) spans 946–958; that stretch reads TPNPNPNPNPNPN.

This sequence belongs to the peptidase C25 family.

It is found in the secreted. It catalyses the reaction Hydrolysis of proteins and small molecule substrates, with a preference for Arg in P1.. Thiol protease. Acts synergistically with RgpB to catalyze the maturation of fimbrial subunits, such as FimA. Its proteolytic activity is a major factor in both periodontal tissue destruction and in evasion of host defense mechanisms. The polypeptide is Gingipain R1 (Porphyromonas gingivalis (strain ATCC 33277 / DSM 20709 / CIP 103683 / JCM 12257 / NCTC 11834 / 2561)).